The sequence spans 250 residues: Small ribosomal subunit protein uS2 (250 aa).

Belongs to the universal ribosomal protein uS2 family.

This Delftia acidovorans (strain DSM 14801 / SPH-1) protein is Small ribosomal subunit protein uS2.